Here is a 398-residue protein sequence, read N- to C-terminus: Ureide permease 2 (398 aa).

The Extracellular portion of the chain corresponds to 1-10 (MYLVESKGGA). Residues 11-31 (IACMLLALLSLGTWPAVLTLL) form a helical membrane-spanning segment. The Cytoplasmic segment spans residues 32–44 (ERRGRLPQHTYLD). The chain crosses the membrane as a helical span at residues 45–65 (YSITNLLAAIIIAFTFGQIGS). Over 66–81 (TKPDSPNFITQLAQDN) the chain is Extracellular. The helical transmembrane segment at 82–102 (WPSVMFAMAGGIVLSLGNLST) threads the bilayer. The Cytoplasmic portion of the chain corresponds to 103–104 (QY). The helical transmembrane segment at 105–125 (AWALVGLSVTEVITSSITVVI) threads the bilayer. At 126 to 139 (GSTLNYFLDDKINK) the chain is on the extracellular side. The helical transmembrane segment at 140–160 (AEILFPGVACFLIAVCLGSAV) threads the bilayer. At 161-229 (HRSNADDNKA…RAIKVFGKRK (69 aa)) the chain is on the cytoplasmic side. A disordered region spans residues 176-200 (ETAKQEASGPSTEIGTNSSKDLETN). Residues 183 to 200 (SGPSTEIGTNSSKDLETN) show a composition bias toward polar residues. 221-228 (AIKVFGKR) lines the ATP pocket. A helical membrane pass occupies residues 230 to 250 (IIGLAITFFAGLCFSLFSPAF). The Extracellular portion of the chain corresponds to 251 to 272 (NLATNDQWNRLKQGVPKLVVYT). Residues 273–293 (AFFYFSVSCFIIALILNVVFL) traverse the membrane as a helical segment. Residues 294 to 315 (YYPVLGLPKSSFKAYLNDWNGR) lie on the Cytoplasmic side of the membrane. The helical transmembrane segment at 316–336 (YWAFLAGFLCGFGNGLQFMGG) threads the bilayer. Residues 337–341 (QAAGY) lie on the Extracellular side of the membrane. The chain crosses the membrane as a helical span at residues 342-362 (AAADSVQALPLVSTFWGVVLF). The Cytoplasmic segment spans residues 363–371 (GEYRRSSRK). A helical membrane pass occupies residues 372–392 (TYLLLFCMLFMFISAVAVLMA). Residues 393 to 398 (SSGHRK) lie on the Extracellular side of the membrane.

The protein belongs to the plant ureide permease (TC 2.A.7.19) family. In terms of tissue distribution, expressed in root xylem, cotyledons and leaves. Expressed in leaf blades, petioles, trichomes, stems, flower stigma, the upper part of pedicels, sepals, and the top and bottom parts of carpels in siliques.

Its subcellular location is the membrane. Proton-coupled transporter that transports a wide spectrum of oxo derivatives of heterocyclic nitrogen compounds, including allantoin, uric acid and xanthine, but not adenine. Mediates high affinity transport of uracil and 5-fluorouracil (a toxic uracil analog). Mediates transport of free pyrimidines and may function during early seedling development in salvage pathways, by the utilization of pyrimidines from seed storage tissue. In Arabidopsis thaliana (Mouse-ear cress), this protein is Ureide permease 2.